The chain runs to 382 residues: tRNA (guanine(37)-N(1))-methyltransferase (382 aa).

S-adenosyl-L-methionine-binding positions include H205, 243–244 (DL), 269–270 (DA), and N291.

The protein belongs to the class I-like SAM-binding methyltransferase superfamily. TRM5/TYW2 family. Monomer.

The protein localises to the mitochondrion matrix. It localises to the nucleus. It is found in the cytoplasm. The enzyme catalyses guanosine(37) in tRNA + S-adenosyl-L-methionine = N(1)-methylguanosine(37) in tRNA + S-adenosyl-L-homocysteine + H(+). Functionally, specifically methylates the N1 position of guanosine-37 in various cytoplasmic and mitochondrial tRNAs. Methylation is not dependent on the nature of the nucleoside 5' of the target nucleoside. This is the first step in the biosynthesis of wybutosine (yW), a modified base adjacent to the anticodon of tRNAs and required for accurate decoding. The polypeptide is tRNA (guanine(37)-N(1))-methyltransferase (Entamoeba histolytica (strain ATCC 30459 / HM-1:IMSS / ABRM)).